A 304-amino-acid chain; its full sequence is Murein tetrapeptide carboxypeptidase (304 aa).

The active-site Nucleophile is the serine 106. Residues glutamate 200 and histidine 270 each act as charge relay system in the active site.

It belongs to the peptidase S66 family.

It localises to the cytoplasm. The catalysed reaction is N-acetyl-D-glucosaminyl-N-acetylmuramoyl-L-alanyl-meso-2,6-diaminoheptanedioyl-D-alanine + H2O = N-acetyl-D-glucosaminyl-N-acetylmuramoyl-L-alanyl-meso-2,6-diaminoheptanedioate + D-alanine. The protein operates within cell wall biogenesis; peptidoglycan recycling. Releases the terminal D-alanine residue from the cytoplasmic tetrapeptide recycling product L-Ala-gamma-D-Glu-meso-Dap-D-Ala. Can also cleave D-Ala from murein derivatives containing the tetrapeptide, i.e. MurNAc-tetrapeptide, UDP-MurNAc-tetrapeptide, GlcNAc-MurNAc-tetrapeptide, and GlcNAc-anhMurNAc-tetrapeptide. Does not act on murein sacculi or cross-linked muropeptides. The tripeptides produced by the LcdA reaction can then be reused as peptidoglycan building blocks; LcdA is thereby involved in murein recycling. The sequence is that of Murein tetrapeptide carboxypeptidase (ldcA) from Escherichia coli O157:H7.